Consider the following 175-residue polypeptide: Deoxyuridine 5'-triphosphate nucleotidohydrolase (175 aa).

Residues 67–69 (RSG), Asn80, 84–86 (TVD), and Lys94 each bind substrate. The disordered stretch occupies residues 138 to 175 (RAEGGFGSTGGHAAVGADTNGQQGGNRYASVVSDRKGQ).

Belongs to the dUTPase family. It depends on Mg(2+) as a cofactor.

It carries out the reaction dUTP + H2O = dUMP + diphosphate + H(+). The protein operates within pyrimidine metabolism; dUMP biosynthesis; dUMP from dCTP (dUTP route): step 2/2. Functionally, this enzyme is involved in nucleotide metabolism: it produces dUMP, the immediate precursor of thymidine nucleotides and it decreases the intracellular concentration of dUTP so that uracil cannot be incorporated into DNA. The polypeptide is Deoxyuridine 5'-triphosphate nucleotidohydrolase (Streptomyces avermitilis (strain ATCC 31267 / DSM 46492 / JCM 5070 / NBRC 14893 / NCIMB 12804 / NRRL 8165 / MA-4680)).